A 270-amino-acid polypeptide reads, in one-letter code: NADPH-dependent 7-cyano-7-deazaguanine reductase (270 aa).

Ile79–Ser81 is a substrate binding site. Residue Ser81 to Lys82 participates in NADPH binding. The active-site Thioimide intermediate is Cys177. Asp184 acts as the Proton donor in catalysis. His216–Glu217 contributes to the substrate binding site. An NADPH-binding site is contributed by Arg245–Gly246.

The protein belongs to the GTP cyclohydrolase I family. QueF type 2 subfamily. In terms of assembly, homodimer.

It is found in the cytoplasm. The catalysed reaction is 7-aminomethyl-7-carbaguanine + 2 NADP(+) = 7-cyano-7-deazaguanine + 2 NADPH + 3 H(+). It participates in tRNA modification; tRNA-queuosine biosynthesis. Catalyzes the NADPH-dependent reduction of 7-cyano-7-deazaguanine (preQ0) to 7-aminomethyl-7-deazaguanine (preQ1). This is NADPH-dependent 7-cyano-7-deazaguanine reductase from Acinetobacter baumannii (strain ATCC 17978 / DSM 105126 / CIP 53.77 / LMG 1025 / NCDC KC755 / 5377).